A 213-amino-acid polypeptide reads, in one-letter code: FMN-dependent NADH:quinone oxidoreductase (213 aa).

Position 17–19 (17–19 (SSS)) interacts with FMN.

The protein belongs to the azoreductase type 1 family. In terms of assembly, homodimer. FMN serves as cofactor.

The catalysed reaction is 2 a quinone + NADH + H(+) = 2 a 1,4-benzosemiquinone + NAD(+). It catalyses the reaction N,N-dimethyl-1,4-phenylenediamine + anthranilate + 2 NAD(+) = 2-(4-dimethylaminophenyl)diazenylbenzoate + 2 NADH + 2 H(+). In terms of biological role, quinone reductase that provides resistance to thiol-specific stress caused by electrophilic quinones. Its function is as follows. Also exhibits azoreductase activity. Catalyzes the reductive cleavage of the azo bond in aromatic azo compounds to the corresponding amines. The polypeptide is FMN-dependent NADH:quinone oxidoreductase (Ruminiclostridium cellulolyticum (strain ATCC 35319 / DSM 5812 / JCM 6584 / H10) (Clostridium cellulolyticum)).